Here is a 304-residue protein sequence, read N- to C-terminus: Triplex capsid protein 2 (304 aa).

It belongs to the herpesviridae TRX2 protein family. In terms of assembly, interacts with TRX1 and major capisd protein/MCP.

The protein resides in the virion. Its subcellular location is the host nucleus. Functionally, structural component of the T=16 icosahedral capsid. The capsid is composed of pentamers and hexamers of major capsid protein/MCP, which are linked together by heterotrimers called triplexes. These triplexes are formed by a single molecule of triplex protein 1/TRX1 and two copies of triplex protein 2/TRX2. Additionally, TRX1 is required for efficient transport of TRX2 to the nucleus, which is the site of capsid assembly. This chain is Triplex capsid protein 2, found in Saimiri sciureus (Common squirrel monkey).